Here is a 276-residue protein sequence, read N- to C-terminus: MRALETIATLREYRKSLKESVGFVPTMGALHKGHQSLIERSLKENSHTIVSVFVNPTQFGANEDFSAYPRPLEKDLALCEGLGVNAVFVPKTSEMYPYEIEKRLKLYAPTFLSHSLEGAMREGHFDGVVQVVLRLFHLVNPTRAYFGKKDAQQLLIIQHLVQDLLLDIEIAPCEIVRDSDNLALSSRNVYLNATQRKQALAIPKALENIKQAIDKGEKACEKLKKLGLKILETLEVDYLEFCNHKLEPLKTIEPTNTLVLVAARVGKTRLLDNLWV.

Residue 27 to 34 (MGALHKGH) coordinates ATP. Catalysis depends on histidine 34, which acts as the Proton donor. Glutamine 58 serves as a coordination point for (R)-pantoate. Glutamine 58 lines the beta-alanine pocket. ATP is bound at residue 147–150 (GKKD). Residue glutamine 153 coordinates (R)-pantoate. ATP is bound by residues valine 176 and 184 to 187 (LSSR).

The protein belongs to the pantothenate synthetase family. In terms of assembly, homodimer.

It localises to the cytoplasm. The enzyme catalyses (R)-pantoate + beta-alanine + ATP = (R)-pantothenate + AMP + diphosphate + H(+). Its pathway is cofactor biosynthesis; (R)-pantothenate biosynthesis; (R)-pantothenate from (R)-pantoate and beta-alanine: step 1/1. Catalyzes the condensation of pantoate with beta-alanine in an ATP-dependent reaction via a pantoyl-adenylate intermediate. The chain is Pantothenate synthetase from Helicobacter pylori (strain Shi470).